A 1189-amino-acid chain; its full sequence is MSGTMPLPPHRPGGYNVVIITLDQHAAGPAARALPRLQHDFPDIHVSVHAAAEWSENPAKLAAAKAAVLGANIVVANLLFIDEHLQAILPEMTAVRDNLDAFVGMVADPQIVRLTKMGDLDMTKPASGPMALLKKLRGKSEPGAGSAEKQMSMLRTIPKMLKFIPGKAQDLRAWFLCMQYWLGGSEDNIESMVRYLVGRYADNRDWRGIKAAAPIDYPEVGLYHPDMPGRITTDPAKLPQPANPVATIGILMLRSYILAKDTAHYDAVIRELQAHGVAVLPAFAGGLDGRPAIEEFLHGKIDTLLSLSGFSLVGGPAYNDSDAAVETLKALDVPYVTAQPLEFQTLGQWRASGGGLGPVETTMLIALPEIDGATNPTVFAGRHDPAGCLTCARGCKPDPEAESHAMAPCPERIETLVDKVVRMAKLRRSKVAERKVGIVLYGFPPNAGAAGTAAYLSVFESLFNVMHAMKASGYQMGELPESVQELRDAVLCGPNTTHGQPAQIAARIPAAEFVARTKWLKDIEAAWGSTPGKHQTDGRDVFVLGRQFGNVFVGLQPVFGYEGDPMRLLFEKGFAPTHAFAAFYRWLREDFAADTLLHFGMHGALEFMPGKQAGMCESCWPDRLIGNLPNVYLYAANNPSEATLAKRRSNAVIVSHLTPPLAQSGLYKGLAEIKESLGRLRALPPDSPEREDLEALVREQAKGVNMDASDLSTLWEKLLETEGALITEGLHVVGRPMTAEARAEMLALMPENADRARADKLLQEEHEIAGLLHALDGRYVPPVPGGDLVRSPEILPTGRNIHAFDPFRMPTAFAIKDGAAQAARLLATHPTLPRSIALVLWGSDNIKSDGGPIGQALALMGARPRFDNYGRLAGAELIPLSELGRPRIDVVMTLSGIFRDLLPLQTKLLAEAAYLCASAENEPLAQNFIRANVLATMQDTGMDFETASLRVFSNAEGAYGSNVNTLVGSAGFGDEDELADAYEARKSFAYGRDGKSTKQVNLLQNVLSKVDLAYQNLESVELGVTTVDHYFDTLGGIARATKRAQGGKETPVYIGDQTRGAGTVRTLQDQIALETRARSLNPKFYEGLLKHGAEGVRQIEAQVTNTLGWSATTGQVEPWVYQRLSETFVLDDEMRERLASLNSAASSRMAQRLLEASDRNYWQPDPATLAALQAAADELEDRMEGVAAE.

This sequence belongs to the Mg-chelatase subunit H family.

It carries out the reaction protoporphyrin IX + Mg(2+) + ATP + H2O = Mg-protoporphyrin IX + ADP + phosphate + 3 H(+). It functions in the pathway porphyrin-containing compound metabolism; bacteriochlorophyll biosynthesis (light-independent). In terms of biological role, involved in bacteriochlorophyll pigment biosynthesis; introduces a magnesium ion into protoporphyrin IX to yield Mg-protoroporphyrin IX. The protein is Magnesium-chelatase subunit H (bchH) of Rhodobacter capsulatus (strain ATCC BAA-309 / NBRC 16581 / SB1003).